The following is a 565-amino-acid chain: SRSF protein kinase 3 (565 aa).

The disordered stretch occupies residues 1–44; that stretch reads MSANAGGSGSVDCGGSSSSSQTSCGPESSGSELTPATPAPRLLQ. Over residues 10 to 31 the composition is skewed to low complexity; the sequence is SVDCGGSSSSSQTSCGPESSGS. Serine 49 is subject to Phosphoserine. A Protein kinase domain is found at 78–563; the sequence is YHVVRKLGWG…AADCLQHPWL (486 aa). ATP contacts are provided by residues 84–92 and lysine 107; that span reads LGWGHFSTV. The Proton acceptor role is filled by aspartate 211. Residues 236–253 show a composition bias toward polar residues; the sequence is WQQSGAQPPSRSTVSTAP. 2 disordered regions span residues 236–280 and 295–350; these read WQQS…KRLL and AAVQ…QTSG. Positions 262–277 are enriched in basic residues; the sequence is SKNKRKKMRRKRKQQK. Residues 325–350 are compositionally biased toward low complexity; it reads AGPSPASSSPVPGGERSLSPSSQTSG. Serine 328 is modified (phosphoserine).

It belongs to the protein kinase superfamily. CMGC Ser/Thr protein kinase family. In terms of tissue distribution, exclusively expressed in skeletal and heart muscle.

Its subcellular location is the nucleus. It localises to the cytoplasm. The catalysed reaction is L-seryl-[protein] + ATP = O-phospho-L-seryl-[protein] + ADP + H(+). The enzyme catalyses L-threonyl-[protein] + ATP = O-phospho-L-threonyl-[protein] + ADP + H(+). Serine/arginine-rich protein-specific kinase which specifically phosphorylates its substrates at serine residues located in regions rich in arginine/serine dipeptides, known as RS domains. Phosphorylates the SR splicing factor SRSF1 and the lamin-B receptor (LBR) in vitro. Required for normal muscle development. In Mus musculus (Mouse), this protein is SRSF protein kinase 3 (Srpk3).